A 119-amino-acid polypeptide reads, in one-letter code: Large ribosomal subunit protein bL20 (119 aa).

Belongs to the bacterial ribosomal protein bL20 family.

Its function is as follows. Binds directly to 23S ribosomal RNA and is necessary for the in vitro assembly process of the 50S ribosomal subunit. It is not involved in the protein synthesizing functions of that subunit. The polypeptide is Large ribosomal subunit protein bL20 (Clostridium beijerinckii (strain ATCC 51743 / NCIMB 8052) (Clostridium acetobutylicum)).